A 433-amino-acid polypeptide reads, in one-letter code: Pyroglutamylated RF-amide peptide receptor (433 aa).

At 1-46 the chain is on the extracellular side; sequence MQALNITAEQFSRLLSAHNLTREQFIHRYGLRPLVYTPELPARAKV. N-linked (GlcNAc...) asparagine glycans are attached at residues N5 and N19. A helical membrane pass occupies residues 47-67; that stretch reads AFALAGALIFALALFGNSLVI. The Cytoplasmic segment spans residues 68–81; it reads YVVTRSKAMRTVTN. The chain crosses the membrane as a helical span at residues 82–102; the sequence is IFICSLALSDLLIAFFCIPVT. The Extracellular portion of the chain corresponds to 103–120; that stretch reads MLQNISDKWLGGAFICKM. Residues 121 to 141 traverse the membrane as a helical segment; the sequence is VPFVQSTAVVTEILTMTCIAV. Residues 142–162 lie on the Cytoplasmic side of the membrane; sequence ERHQGLVHPFKMKWQYTTRRA. A helical membrane pass occupies residues 163 to 183; that stretch reads FTILGVVWLAAIIVGSPMWHV. The Extracellular segment spans residues 184–212; sequence QRLEIKYDFLYEKEHICCLEEWASPVHQR. A helical membrane pass occupies residues 213-233; that stretch reads IYSTFILVILFLLPLVVMLVL. The Cytoplasmic portion of the chain corresponds to 234-271; that stretch reads YSKIGYELWIKKRVGDSSALQTIHGKEMSKIARKKKRA. A helical membrane pass occupies residues 272–292; that stretch reads VIMMVTVVALFAACWAPFHVV. Topologically, residues 293-313 are extracellular; that stretch reads HMMVEYSNFEKEYDDVTIKMV. A helical membrane pass occupies residues 314-334; sequence FAVAQTIGFFNSICNPFVYAF. At 335-433 the chain is on the cytoplasmic side; the sequence is MNENFKKNFL…NSTFGSGHEL (99 aa). Residues 356–389 are disordered; it reads SSPARKPGNSGISMMQKRAKLSRPQRPVEETKGD.

Belongs to the G-protein coupled receptor 1 family. Highly expressed in the adrenal gland and at moderate levels in the eye and testis. Expressed widely in the brain with high levels in the hypothalamus and moderate levels in the amygdala, basal forebrain, cortex, medulla oblongata, midbrain and thalamus.

The protein localises to the cell membrane. Receptor for the orexigenic neuropeptide QRFP. The activity of this receptor is mediated by G proteins that modulate adenylate cyclase activity and intracellular calcium levels. This is Pyroglutamylated RF-amide peptide receptor (Qrfpr) from Rattus norvegicus (Rat).